Consider the following 704-residue polypeptide: Fatty acid oxidation complex subunit alpha (704 aa).

Residues 1–190 are enoyl-CoA hydratase; the sequence is MSEQKAFSLK…KLGVVDACVP (190 aa). A 3-hydroxyacyl-CoA dehydrogenase region spans residues 308-704; the sequence is TAVNKVGVLG…RAGEGRNFYD (397 aa).

It in the N-terminal section; belongs to the enoyl-CoA hydratase/isomerase family. This sequence in the central section; belongs to the 3-hydroxyacyl-CoA dehydrogenase family. As to quaternary structure, heterotetramer of two alpha chains (FadJ) and two beta chains (FadI).

The protein resides in the cytoplasm. The enzyme catalyses a (3S)-3-hydroxyacyl-CoA = a (2E)-enoyl-CoA + H2O. It catalyses the reaction a 4-saturated-(3S)-3-hydroxyacyl-CoA = a (3E)-enoyl-CoA + H2O. The catalysed reaction is a (3S)-3-hydroxyacyl-CoA + NAD(+) = a 3-oxoacyl-CoA + NADH + H(+). It carries out the reaction (3S)-3-hydroxybutanoyl-CoA = (3R)-3-hydroxybutanoyl-CoA. It functions in the pathway lipid metabolism; fatty acid beta-oxidation. In terms of biological role, catalyzes the formation of a hydroxyacyl-CoA by addition of water on enoyl-CoA. Also exhibits 3-hydroxyacyl-CoA epimerase and 3-hydroxyacyl-CoA dehydrogenase activities. The sequence is that of Fatty acid oxidation complex subunit alpha from Vibrio campbellii (strain ATCC BAA-1116).